The chain runs to 325 residues: Beta-ketoacyl-[acyl-carrier-protein] synthase III (325 aa).

Active-site residues include Cys116 and His252. Positions Gln253–Arg257 are ACP-binding. Asn282 is an active-site residue.

It belongs to the thiolase-like superfamily. FabH family. As to quaternary structure, homodimer.

The protein localises to the cytoplasm. The catalysed reaction is malonyl-[ACP] + acetyl-CoA + H(+) = 3-oxobutanoyl-[ACP] + CO2 + CoA. The protein operates within lipid metabolism; fatty acid biosynthesis. In terms of biological role, catalyzes the condensation reaction of fatty acid synthesis by the addition to an acyl acceptor of two carbons from malonyl-ACP. Catalyzes the first condensation reaction which initiates fatty acid synthesis and may therefore play a role in governing the total rate of fatty acid production. Possesses both acetoacetyl-ACP synthase and acetyl transacylase activities. Its substrate specificity determines the biosynthesis of branched-chain and/or straight-chain of fatty acids. This Xanthomonas campestris pv. campestris (strain ATCC 33913 / DSM 3586 / NCPPB 528 / LMG 568 / P 25) protein is Beta-ketoacyl-[acyl-carrier-protein] synthase III.